The sequence spans 205 residues: Outer-membrane lipoprotein LolB (205 aa).

A signal peptide spans 1–17 (MFLRHVIVFSLIALLTG). Cys18 carries the N-palmitoyl cysteine lipid modification. Residue Cys18 is the site of S-diacylglycerol cysteine attachment.

Belongs to the LolB family. Monomer.

The protein resides in the cell outer membrane. Its function is as follows. Plays a critical role in the incorporation of lipoproteins in the outer membrane after they are released by the LolA protein. This Pseudomonas savastanoi pv. phaseolicola (strain 1448A / Race 6) (Pseudomonas syringae pv. phaseolicola (strain 1448A / Race 6)) protein is Outer-membrane lipoprotein LolB.